The primary structure comprises 240 residues: UDP-2,3-diacylglucosamine hydrolase (240 aa).

Residues D8, H10, D41, N79, and H114 each coordinate Mn(2+). 79 to 80 provides a ligand contact to substrate; it reads NR. Residues D122, S160, N164, K167, and H195 each contribute to the substrate site. Mn(2+)-binding residues include H195 and H197.

Belongs to the LpxH family. The cofactor is Mn(2+).

It is found in the cell inner membrane. The enzyme catalyses UDP-2-N,3-O-bis[(3R)-3-hydroxytetradecanoyl]-alpha-D-glucosamine + H2O = 2-N,3-O-bis[(3R)-3-hydroxytetradecanoyl]-alpha-D-glucosaminyl 1-phosphate + UMP + 2 H(+). The protein operates within glycolipid biosynthesis; lipid IV(A) biosynthesis; lipid IV(A) from (3R)-3-hydroxytetradecanoyl-[acyl-carrier-protein] and UDP-N-acetyl-alpha-D-glucosamine: step 4/6. Functionally, hydrolyzes the pyrophosphate bond of UDP-2,3-diacylglucosamine to yield 2,3-diacylglucosamine 1-phosphate (lipid X) and UMP by catalyzing the attack of water at the alpha-P atom. Involved in the biosynthesis of lipid A, a phosphorylated glycolipid that anchors the lipopolysaccharide to the outer membrane of the cell. The chain is UDP-2,3-diacylglucosamine hydrolase from Salmonella newport (strain SL254).